The chain runs to 318 residues: Acetyl-coenzyme A carboxylase carboxyl transferase subunit alpha (318 aa).

The CoA carboxyltransferase C-terminal domain maps to 34–295; it reads SIEEEITKLR…KATIKQQLAQ (262 aa).

It belongs to the AccA family. In terms of assembly, acetyl-CoA carboxylase is a heterohexamer composed of biotin carboxyl carrier protein (AccB), biotin carboxylase (AccC) and two subunits each of ACCase subunit alpha (AccA) and ACCase subunit beta (AccD).

Its subcellular location is the cytoplasm. The enzyme catalyses N(6)-carboxybiotinyl-L-lysyl-[protein] + acetyl-CoA = N(6)-biotinyl-L-lysyl-[protein] + malonyl-CoA. It participates in lipid metabolism; malonyl-CoA biosynthesis; malonyl-CoA from acetyl-CoA: step 1/1. In terms of biological role, component of the acetyl coenzyme A carboxylase (ACC) complex. First, biotin carboxylase catalyzes the carboxylation of biotin on its carrier protein (BCCP) and then the CO(2) group is transferred by the carboxyltransferase to acetyl-CoA to form malonyl-CoA. The chain is Acetyl-coenzyme A carboxylase carboxyl transferase subunit alpha from Pseudoalteromonas atlantica (strain T6c / ATCC BAA-1087).